A 283-amino-acid chain; its full sequence is 3-methyl-2-oxobutanoate hydroxymethyltransferase (283 aa).

Residues aspartate 44 and aspartate 83 each coordinate Mg(2+). Residues 44–45 (DS), aspartate 83, and lysine 112 contribute to the 3-methyl-2-oxobutanoate site. Glutamate 114 contacts Mg(2+). The active-site Proton acceptor is the glutamate 181.

It belongs to the PanB family. As to quaternary structure, homodecamer; pentamer of dimers. It depends on Mg(2+) as a cofactor.

The protein resides in the cytoplasm. The catalysed reaction is 3-methyl-2-oxobutanoate + (6R)-5,10-methylene-5,6,7,8-tetrahydrofolate + H2O = 2-dehydropantoate + (6S)-5,6,7,8-tetrahydrofolate. It participates in cofactor biosynthesis; coenzyme A biosynthesis. Functionally, catalyzes the reversible reaction in which hydroxymethyl group from 5,10-methylenetetrahydrofolate is transferred onto alpha-ketoisovalerate to form ketopantoate. This is 3-methyl-2-oxobutanoate hydroxymethyltransferase from Pyrococcus furiosus (strain ATCC 43587 / DSM 3638 / JCM 8422 / Vc1).